The chain runs to 183 residues: Nucleoside triphosphate pyrophosphatase (183 aa).

The active-site Proton acceptor is aspartate 71.

It belongs to the Maf family. A divalent metal cation is required as a cofactor.

Its subcellular location is the cytoplasm. It catalyses the reaction a ribonucleoside 5'-triphosphate + H2O = a ribonucleoside 5'-phosphate + diphosphate + H(+). The catalysed reaction is a 2'-deoxyribonucleoside 5'-triphosphate + H2O = a 2'-deoxyribonucleoside 5'-phosphate + diphosphate + H(+). In terms of biological role, nucleoside triphosphate pyrophosphatase. May have a dual role in cell division arrest and in preventing the incorporation of modified nucleotides into cellular nucleic acids. The sequence is that of Nucleoside triphosphate pyrophosphatase from Campylobacter jejuni subsp. jejuni serotype O:2 (strain ATCC 700819 / NCTC 11168).